Reading from the N-terminus, the 420-residue chain is Gamma-glutamyl phosphate reductase (420 aa).

The protein belongs to the gamma-glutamyl phosphate reductase family.

It localises to the cytoplasm. The enzyme catalyses L-glutamate 5-semialdehyde + phosphate + NADP(+) = L-glutamyl 5-phosphate + NADPH + H(+). It functions in the pathway amino-acid biosynthesis; L-proline biosynthesis; L-glutamate 5-semialdehyde from L-glutamate: step 2/2. Its function is as follows. Catalyzes the NADPH-dependent reduction of L-glutamate 5-phosphate into L-glutamate 5-semialdehyde and phosphate. The product spontaneously undergoes cyclization to form 1-pyrroline-5-carboxylate. This chain is Gamma-glutamyl phosphate reductase, found in Neisseria meningitidis serogroup C / serotype 2a (strain ATCC 700532 / DSM 15464 / FAM18).